A 318-amino-acid polypeptide reads, in one-letter code: Solute carrier family 25 member 34 (318 aa).

Solcar repeat units follow at residues 18–111 (VSPA…ACQA), 115–208 (QQPG…AKAW), and 218–309 (DSWL…LRKL). The next 6 membrane-spanning stretches (helical) occupy residues 21–41 (AVDL…TNPL), 59–79 (TYPR…RADG), 112–134 (GLTQ…GAFV), 184–205 (VGAA…FTSA), 220–240 (WLAT…VMAP), and 292–315 (LGPH…RAQH).

The protein belongs to the mitochondrial carrier (TC 2.A.29) family.

The protein resides in the mitochondrion inner membrane. It carries out the reaction a dicarboxylate(in) + sulfate(out) = a dicarboxylate(out) + sulfate(in). Its function is as follows. Putative antiporter that exchanges dicarboxylates and sulfur oxoanions across the inner membrane of mitochondria. This chain is Solute carrier family 25 member 34 (Slc25a34), found in Rattus norvegicus (Rat).